The primary structure comprises 720 residues: Replication restart protein PriA (720 aa).

Positions 200–366 constitute a Helicase ATP-binding domain; the sequence is ILMKNCFTSW…LHKKCFYIKF (167 aa). ATP is bound at residue 213 to 220; sequence KNNFYLKV. A DEAH box motif is present at residues 309–312; sequence NQEH. Cys-425, Cys-428, Cys-434, Cys-437, Cys-452, Cys-455, Cys-465, and Cys-468 together coordinate Zn(2+).

Belongs to the helicase family. PriA subfamily. As to quaternary structure, component of the replication restart primosome. Zn(2+) serves as cofactor.

It catalyses the reaction Couples ATP hydrolysis with the unwinding of duplex DNA by translocating in the 3'-5' direction.. The catalysed reaction is ATP + H2O = ADP + phosphate + H(+). Functionally, initiates the restart of stalled replication forks, which reloads the replicative helicase on sites other than the origin of replication. Recognizes and binds to abandoned replication forks and remodels them to uncover a helicase loading site. Promotes assembly of the primosome at these replication forks. This chain is Replication restart protein PriA, found in Buchnera aphidicola subsp. Schizaphis graminum (strain Sg).